A 139-amino-acid polypeptide reads, in one-letter code: Small ribosomal subunit protein uS11 (139 aa).

The interval 117-139 (VEDVTPIPHDGTRPKGGRRGRRV) is disordered.

This sequence belongs to the universal ribosomal protein uS11 family. In terms of assembly, part of the 30S ribosomal subunit.

Functionally, located on the platform of the 30S subunit. In Thermococcus onnurineus (strain NA1), this protein is Small ribosomal subunit protein uS11.